We begin with the raw amino-acid sequence, 860 residues long: Leucine--tRNA ligase (860 aa).

The 'HIGH' region motif lies at proline 42 to histidine 52. The 'KMSKS' region motif lies at lysine 619–serine 623. Lysine 622 serves as a coordination point for ATP.

It belongs to the class-I aminoacyl-tRNA synthetase family.

The protein localises to the cytoplasm. It catalyses the reaction tRNA(Leu) + L-leucine + ATP = L-leucyl-tRNA(Leu) + AMP + diphosphate. This is Leucine--tRNA ligase from Proteus mirabilis (strain HI4320).